The following is a 112-amino-acid chain: Large ribosomal subunit protein uL22 (112 aa).

Belongs to the universal ribosomal protein uL22 family. In terms of assembly, part of the 50S ribosomal subunit.

In terms of biological role, this protein binds specifically to 23S rRNA; its binding is stimulated by other ribosomal proteins, e.g. L4, L17, and L20. It is important during the early stages of 50S assembly. It makes multiple contacts with different domains of the 23S rRNA in the assembled 50S subunit and ribosome. Its function is as follows. The globular domain of the protein is located near the polypeptide exit tunnel on the outside of the subunit, while an extended beta-hairpin is found that lines the wall of the exit tunnel in the center of the 70S ribosome. This is Large ribosomal subunit protein uL22 from Sorangium cellulosum (strain So ce56) (Polyangium cellulosum (strain So ce56)).